A 305-amino-acid polypeptide reads, in one-letter code: Uridylate cyclase (305 aa).

2 residues coordinate Mn(2+): Asp58 and Asp102.

It belongs to the adenylyl cyclase class-4/guanylyl cyclase family. Pyrimidine cyclase subfamily. Homodimer. Requires Mn(2+) as cofactor.

It is found in the cytoplasm. It carries out the reaction GTP = 3',5'-cyclic GMP + diphosphate. The enzyme catalyses UTP = 3',5'-cyclic UMP + diphosphate. Pycsar (pyrimidine cyclase system for antiphage resistance) provides immunity against bacteriophage. The pyrimidine cyclase (PycC) synthesizes cyclic nucleotides in response to infection; these serve as specific second messenger signals. The signals activate the adjacent effector, leading to bacterial cell death and abortive phage infection. A clade D Pycsar system. Its function is as follows. The pyrimidine cyclase gene of a two-gene Pycsar system, generates cyclic UMP (cUMP) from UTP as well as cGMP from GTP to a lesser extent, has little to no activity on ATP or CTP. Expression of this and adjacent effector MePycTM (AC A0A1C5G2D0) probably confers resistance to bacteriophage. The genes are probably only expressed in response to bacteriophage infection. This chain is Uridylate cyclase, found in Micromonospora echinofusca.